The following is a 475-amino-acid chain: Ribulose bisphosphate carboxylase large chain (475 aa).

Residues 1–2 constitute a propeptide that is removed on maturation; it reads MS. Proline 3 carries the N-acetylproline modification. An N6,N6,N6-trimethyllysine modification is found at lysine 14. 2 residues coordinate substrate: asparagine 123 and threonine 173. The active-site Proton acceptor is lysine 175. Lysine 177 contacts substrate. Lysine 201, aspartate 203, and glutamate 204 together coordinate Mg(2+). An N6-carboxylysine modification is found at lysine 201. Histidine 294 acts as the Proton acceptor in catalysis. Substrate is bound by residues arginine 295, histidine 327, and serine 379.

It belongs to the RuBisCO large chain family. Type I subfamily. In terms of assembly, heterohexadecamer of 8 large chains and 8 small chains; disulfide-linked. The disulfide link is formed within the large subunit homodimers. Mg(2+) is required as a cofactor. Post-translationally, the disulfide bond which can form in the large chain dimeric partners within the hexadecamer appears to be associated with oxidative stress and protein turnover.

The protein resides in the plastid. The protein localises to the chloroplast. The enzyme catalyses 2 (2R)-3-phosphoglycerate + 2 H(+) = D-ribulose 1,5-bisphosphate + CO2 + H2O. The catalysed reaction is D-ribulose 1,5-bisphosphate + O2 = 2-phosphoglycolate + (2R)-3-phosphoglycerate + 2 H(+). Its function is as follows. RuBisCO catalyzes two reactions: the carboxylation of D-ribulose 1,5-bisphosphate, the primary event in carbon dioxide fixation, as well as the oxidative fragmentation of the pentose substrate in the photorespiration process. Both reactions occur simultaneously and in competition at the same active site. In Marchantia polymorpha (Common liverwort), this protein is Ribulose bisphosphate carboxylase large chain (rbcL).